A 508-amino-acid chain; its full sequence is DEAD-box ATP-dependent RNA helicase 8 (508 aa).

The tract at residues 1–123 is disordered; sequence MDPRARYPPG…LKLPPQDTRY (123 aa). A compositionally biased stretch (low complexity) spans 18–53; it reads NPNYYNRGPPLQQQHNHHQQQQTSAPHHQQYVQRQP. The segment covering 54–64 has biased composition (basic residues); that stretch reads QQHHHHNHHQQ. A Q motif motif is present at residues 134–162; it reads NEFEDYFLKRELLMGIYEKGFERPSPIQE. The Helicase ATP-binding domain maps to 165 to 335; the sequence is IPIALTGSDI…DKYLPKPYVI (171 aa). 178–185 contacts ATP; it reads AKNGTGKT. Residues 283–286 carry the DEAD box motif; it reads DEAD. Positions 345–505 constitute a Helicase C-terminal domain; the sequence is GITQFYAFVE…PIPPQIDQAI (161 aa).

It belongs to the DEAD box helicase family. DDX6/DHH1 subfamily.

Its subcellular location is the cytoplasm. The protein localises to the P-body. The catalysed reaction is ATP + H2O = ADP + phosphate + H(+). ATP-dependent RNA helicase involved in mRNA turnover, and more specifically in mRNA decapping. The sequence is that of DEAD-box ATP-dependent RNA helicase 8 from Oryza sativa subsp. japonica (Rice).